The following is a 348-amino-acid chain: UDP-glucose 4-epimerase (348 aa).

Thr-125 serves as a coordination point for substrate. Tyr-149 functions as the Proton acceptor in the catalytic mechanism.

This sequence belongs to the NAD(P)-dependent epimerase/dehydratase family. NAD(+) is required as a cofactor.

It carries out the reaction UDP-alpha-D-glucose = UDP-alpha-D-galactose. Its pathway is carbohydrate metabolism; galactose metabolism. It participates in glycan metabolism; exopolysaccharide biosynthesis. This chain is UDP-glucose 4-epimerase (exoB), found in Azospirillum brasilense.